The following is a 242-amino-acid chain: 3-dehydroquinate dehydratase (242 aa).

3-dehydroquinate-binding positions include 39-41 and Arg-73; that span reads EVR. The active-site Proton donor/acceptor is the His-135. Lys-162 acts as the Schiff-base intermediate with substrate in catalysis. 3-dehydroquinate-binding residues include Arg-203 and Gln-228.

Belongs to the type-I 3-dehydroquinase family. In terms of assembly, homodimer.

It catalyses the reaction 3-dehydroquinate = 3-dehydroshikimate + H2O. It functions in the pathway metabolic intermediate biosynthesis; chorismate biosynthesis; chorismate from D-erythrose 4-phosphate and phosphoenolpyruvate: step 3/7. Functionally, involved in the third step of the chorismate pathway, which leads to the biosynthesis of aromatic amino acids. Catalyzes the cis-dehydration of 3-dehydroquinate (DHQ) and introduces the first double bond of the aromatic ring to yield 3-dehydroshikimate. This chain is 3-dehydroquinate dehydratase, found in Methanosarcina acetivorans (strain ATCC 35395 / DSM 2834 / JCM 12185 / C2A).